A 399-amino-acid polypeptide reads, in one-letter code: Organelle RRM domain-containing protein 1, chloroplastic (399 aa).

Residues 1 to 52 constitute a chloroplast transit peptide; it reads MDAARASLLLAGGLAVSTSTSAVATAAQTVSIPHLSPHTRRRRQRRFLRLAS. The RRM domain occupies 295–373; sequence KRLFVTGLSF…WMIVVDVAKH (79 aa). The segment at 377–399 is disordered; the sequence is DRQPPYSASGRSNQVLRSRYHTG.

The protein localises to the plastid. Its subcellular location is the chloroplast. In terms of biological role, involved in C-to-U editing of chloroplastic RNA. Functions as major chloroplastic editing factor. Controls a majority of the chloroplastic editing sites. This is Organelle RRM domain-containing protein 1, chloroplastic from Oryza sativa subsp. japonica (Rice).